A 261-amino-acid polypeptide reads, in one-letter code: Aminoglycoside N(3)-acetyltransferase IV (261 aa).

The protein belongs to the antibiotic N-acetyltransferase family.

It carries out the reaction a 2-deoxystreptamine antibiotic + acetyl-CoA = an N(3)-acetyl-2-deoxystreptamine antibiotic + CoA + H(+). Resistance to antibiotics containing the 2-deoxy-streptamine ring including gentamicin, kanamycin, tobramycin, neomycin and apramycin. In Salmonella sp, this protein is Aminoglycoside N(3)-acetyltransferase IV (aacC4).